Consider the following 262-residue polypeptide: Trypsin theta (262 aa).

An N-terminal signal peptide occupies residues 1-19; sequence MHGLVVLLVCLAVGSAFAG. Positions 20–34 are cleaved as a propeptide — activation peptide; the sequence is TIGVSNADPFEREGR. One can recognise a Peptidase S1 domain in the interval 35-260; it reads IVGGEDTTIR…LRKWILNASQ (226 aa). Residues Cys61 and Cys77 are joined by a disulfide bond. Catalysis depends on charge relay system residues His76 and Asp121. 2 cysteine pairs are disulfide-bonded: Cys186–Cys203 and Cys212–Cys236. The active-site Charge relay system is Ser216.

It belongs to the peptidase S1 family.

It localises to the secreted. Its subcellular location is the extracellular space. The catalysed reaction is Preferential cleavage: Arg-|-Xaa, Lys-|-Xaa.. This Drosophila erecta (Fruit fly) protein is Trypsin theta (thetaTry).